Here is a 390-residue protein sequence, read N- to C-terminus: Queuine tRNA-ribosyltransferase (390 aa).

Catalysis depends on Asp92, which acts as the Proton acceptor. Residues Asp92–Phe96, Asp146, Gln195, and Gly222 contribute to the substrate site. The tract at residues Gly253–Asp259 is RNA binding. The active-site Nucleophile is Asp272. Positions Thr277 to Arg281 are RNA binding; important for wobble base 34 recognition. Zn(2+) is bound by residues Cys310, Cys312, Cys315, and His354.

Belongs to the queuine tRNA-ribosyltransferase family. Homodimer. Within each dimer, one monomer is responsible for RNA recognition and catalysis, while the other monomer binds to the replacement base PreQ1. The cofactor is Zn(2+).

It carries out the reaction 7-aminomethyl-7-carbaguanine + guanosine(34) in tRNA = 7-aminomethyl-7-carbaguanosine(34) in tRNA + guanine. The protein operates within tRNA modification; tRNA-queuosine biosynthesis. Functionally, catalyzes the base-exchange of a guanine (G) residue with the queuine precursor 7-aminomethyl-7-deazaguanine (PreQ1) at position 34 (anticodon wobble position) in tRNAs with GU(N) anticodons (tRNA-Asp, -Asn, -His and -Tyr). Catalysis occurs through a double-displacement mechanism. The nucleophile active site attacks the C1' of nucleotide 34 to detach the guanine base from the RNA, forming a covalent enzyme-RNA intermediate. The proton acceptor active site deprotonates the incoming PreQ1, allowing a nucleophilic attack on the C1' of the ribose to form the product. After dissociation, two additional enzymatic reactions on the tRNA convert PreQ1 to queuine (Q), resulting in the hypermodified nucleoside queuosine (7-(((4,5-cis-dihydroxy-2-cyclopenten-1-yl)amino)methyl)-7-deazaguanosine). The chain is Queuine tRNA-ribosyltransferase from Verminephrobacter eiseniae (strain EF01-2).